The primary structure comprises 119 residues: Large ribosomal subunit protein bL20 (119 aa).

Belongs to the bacterial ribosomal protein bL20 family.

Its function is as follows. Binds directly to 23S ribosomal RNA and is necessary for the in vitro assembly process of the 50S ribosomal subunit. It is not involved in the protein synthesizing functions of that subunit. The protein is Large ribosomal subunit protein bL20 of Albidiferax ferrireducens (strain ATCC BAA-621 / DSM 15236 / T118) (Rhodoferax ferrireducens).